The sequence spans 128 residues: Small ribosomal subunit protein uS9 (128 aa).

The tract at residues 107–128 (RAVERKKPGRPKARKRFQFSKR) is disordered. Over residues 113-128 (KPGRPKARKRFQFSKR) the composition is skewed to basic residues.

Belongs to the universal ribosomal protein uS9 family.

This chain is Small ribosomal subunit protein uS9, found in Parabacteroides distasonis (strain ATCC 8503 / DSM 20701 / CIP 104284 / JCM 5825 / NCTC 11152).